The primary structure comprises 425 residues: 3-phosphoshikimate 1-carboxyvinyltransferase (425 aa).

Residues lysine 23, serine 24, and arginine 28 each coordinate 3-phosphoshikimate. Lysine 23 contributes to the phosphoenolpyruvate binding site. Phosphoenolpyruvate is bound by residues glycine 96 and arginine 124. Positions 170, 171, 172, 198, 314, and 341 each coordinate 3-phosphoshikimate. Phosphoenolpyruvate is bound at residue glutamine 172. The active-site Proton acceptor is aspartate 314. Residues arginine 345, arginine 386, and lysine 411 each contribute to the phosphoenolpyruvate site.

Belongs to the EPSP synthase family. In terms of assembly, monomer.

It localises to the cytoplasm. It carries out the reaction 3-phosphoshikimate + phosphoenolpyruvate = 5-O-(1-carboxyvinyl)-3-phosphoshikimate + phosphate. Its pathway is metabolic intermediate biosynthesis; chorismate biosynthesis; chorismate from D-erythrose 4-phosphate and phosphoenolpyruvate: step 6/7. In terms of biological role, catalyzes the transfer of the enolpyruvyl moiety of phosphoenolpyruvate (PEP) to the 5-hydroxyl of shikimate-3-phosphate (S3P) to produce enolpyruvyl shikimate-3-phosphate and inorganic phosphate. In Nostoc sp. (strain PCC 7120 / SAG 25.82 / UTEX 2576), this protein is 3-phosphoshikimate 1-carboxyvinyltransferase.